We begin with the raw amino-acid sequence, 271 residues long: Ribosomal RNA small subunit methyltransferase A (271 aa).

Residues H11, L13, G38, E58, D86, and N101 each coordinate S-adenosyl-L-methionine.

This sequence belongs to the class I-like SAM-binding methyltransferase superfamily. rRNA adenine N(6)-methyltransferase family. RsmA subfamily.

The protein localises to the cytoplasm. The catalysed reaction is adenosine(1518)/adenosine(1519) in 16S rRNA + 4 S-adenosyl-L-methionine = N(6)-dimethyladenosine(1518)/N(6)-dimethyladenosine(1519) in 16S rRNA + 4 S-adenosyl-L-homocysteine + 4 H(+). Its function is as follows. Specifically dimethylates two adjacent adenosines (A1518 and A1519) in the loop of a conserved hairpin near the 3'-end of 16S rRNA in the 30S particle. May play a critical role in biogenesis of 30S subunits. The chain is Ribosomal RNA small subunit methyltransferase A from Helicobacter pylori (strain HPAG1).